The following is a 256-amino-acid chain: RNA polymerase sigma factor SigI1 (256 aa).

A Polymerase core binding motif is present at residues 67–80; that stretch reads DEFSIALSAFNEAI. Positions 205 to 224 form a DNA-binding region, H-T-H motif; it reads RNELKKKAKVHGRTIGNNRK.

The protein belongs to the sigma-70 factor family. SigI subfamily. In terms of assembly, interacts with RsgI1.

Its subcellular location is the cytoplasm. Its activity is regulated as follows. Negatively regulated by the anti-sigma-I factor RsgI1. Binding of the polysaccharide substrate to RsgI1 may lead to the release and activation of SigI1. In terms of biological role, sigma factors are initiation factors that promote the attachment of RNA polymerase to specific initiation sites and are then released. This sigma factor is involved in regulation of cellulosomal genes via an external polysaccharide-sensing mechanism. SigI1 promotes transcription from sigI1 and celS promoters. This Acetivibrio thermocellus (strain ATCC 27405 / DSM 1237 / JCM 9322 / NBRC 103400 / NCIMB 10682 / NRRL B-4536 / VPI 7372) (Clostridium thermocellum) protein is RNA polymerase sigma factor SigI1.